Consider the following 474-residue polypeptide: Glutamine synthetase (474 aa).

Positions 14–99 (EKIELIDLKF…VCSIKEPRTG (86 aa)) constitute a GS beta-grasp domain. One can recognise a GS catalytic domain in the interval 106-474 (PRVIAQKAID…PYEFSIYYDV (369 aa)). The Mg(2+) site is built by Glu131 and Glu133. Glu211 provides a ligand contact to ATP. 2 residues coordinate Mg(2+): Glu216 and Glu224. L-glutamate contacts are provided by residues 268–269 (NG) and Gly269. Position 273 (His273) interacts with Mg(2+). ATP contacts are provided by residues 275–277 (HQS) and Ser277. Positions 325, 331, and 343 each coordinate L-glutamate. ATP-binding residues include Arg343, Arg348, and Lys357. Glu362 is a Mg(2+) binding site. An L-glutamate-binding site is contributed by Arg364. Tyr402 is subject to O-AMP-tyrosine.

This sequence belongs to the glutamine synthetase family. As to quaternary structure, oligomer of 12 subunits arranged in the form of two hexagons. Mg(2+) is required as a cofactor.

It is found in the cytoplasm. The enzyme catalyses L-glutamate + NH4(+) + ATP = L-glutamine + ADP + phosphate + H(+). The activity of this enzyme could be controlled by adenylation under conditions of abundant glutamine. Its function is as follows. Involved in nitrogen metabolism via ammonium assimilation. Catalyzes the ATP-dependent biosynthesis of glutamine from glutamate and ammonia. This chain is Glutamine synthetase, found in Nostoc sp. (strain PCC 7120 / SAG 25.82 / UTEX 2576).